A 593-amino-acid polypeptide reads, in one-letter code: NADH-quinone oxidoreductase subunit C/D (593 aa).

Positions 1 to 184 are NADH dehydrogenase I subunit C; the sequence is MTADSALYIP…DPYSLSAAKQ (184 aa). The segment at 208-593 is NADH dehydrogenase I subunit D; that stretch reads DYMFLNLGPN…IDFVMADVDR (386 aa).

It in the N-terminal section; belongs to the complex I 30 kDa subunit family. In the C-terminal section; belongs to the complex I 49 kDa subunit family. In terms of assembly, NDH-1 is composed of 13 different subunits. Subunits NuoB, CD, E, F, and G constitute the peripheral sector of the complex.

It localises to the cell inner membrane. The enzyme catalyses a quinone + NADH + 5 H(+)(in) = a quinol + NAD(+) + 4 H(+)(out). In terms of biological role, NDH-1 shuttles electrons from NADH, via FMN and iron-sulfur (Fe-S) centers, to quinones in the respiratory chain. The immediate electron acceptor for the enzyme in this species is believed to be ubiquinone. Couples the redox reaction to proton translocation (for every two electrons transferred, four hydrogen ions are translocated across the cytoplasmic membrane), and thus conserves the redox energy in a proton gradient. The sequence is that of NADH-quinone oxidoreductase subunit C/D from Pseudomonas paraeruginosa (strain DSM 24068 / PA7) (Pseudomonas aeruginosa (strain PA7)).